We begin with the raw amino-acid sequence, 85 residues long: Putative membrane protein insertion efficiency factor (85 aa).

Belongs to the UPF0161 family.

The protein resides in the cell inner membrane. In terms of biological role, could be involved in insertion of integral membrane proteins into the membrane. This chain is Putative membrane protein insertion efficiency factor, found in Serratia proteamaculans (strain 568).